The primary structure comprises 445 residues: MAVKKLFGTSGIRGKINSEVTCELALNVGKSLACYLGNEGTVVLGYDTRTTNVMLDQAICAGLLESGVDVIKIGMVPTPLVGYATDKLGADAGVMLTASHNPSQYNGIKIWNANGMAYTSAQEAKIEEIYSNESYTSVSWDKVGSLRVNEEIKGRYIDDLVGMVNIKPGLKVVIDCASGAGSEISPLVFRKAGCEVTTLNSQPDGFFPGRNPEPNAENLQNLMKTVVAIGADLGIAHDGDADRMITIDENGDISPFDSLLALMSKEFDGDIVTTVDAGLCMDESVKGNVLRTKVGDVNVAEVIIEKDAAFGGEPSGTWLHPDFCMCPDGILSGLRMAELVSNKGKLSELLLEIPSYPNIREKIICSKEAKTAVMENMEDLLKDSFDDIKEINSIDGVRLTFNDDSWVLVRPSGTEDYIRITLESKDSTKAQAIKETCVKIIKENI.

The Phosphoserine intermediate role is filled by Ser99. Residues Ser99, Asp238, Asp240, and Asp242 each coordinate Mg(2+). The residue at position 99 (Ser99) is a Phosphoserine.

The protein belongs to the phosphohexose mutase family. It depends on Mg(2+) as a cofactor. In terms of processing, activated by phosphorylation.

The enzyme catalyses alpha-D-glucosamine 1-phosphate = D-glucosamine 6-phosphate. In terms of biological role, catalyzes the conversion of glucosamine-6-phosphate to glucosamine-1-phosphate. This chain is Probable phosphoglucosamine mutase, found in Methanobrevibacter smithii (strain ATCC 35061 / DSM 861 / OCM 144 / PS).